The primary structure comprises 121 residues: Small ribosomal subunit protein uS13 (121 aa).

The segment at 91–121 is disordered; it reads HRRGLPVRGQNTKNNARTRKGPRKTVANKKK. The segment covering 106 to 121 has biased composition (basic residues); sequence ARTRKGPRKTVANKKK.

It belongs to the universal ribosomal protein uS13 family. In terms of assembly, part of the 30S ribosomal subunit. Forms a loose heterodimer with protein S19. Forms two bridges to the 50S subunit in the 70S ribosome.

Its function is as follows. Located at the top of the head of the 30S subunit, it contacts several helices of the 16S rRNA. In the 70S ribosome it contacts the 23S rRNA (bridge B1a) and protein L5 of the 50S subunit (bridge B1b), connecting the 2 subunits; these bridges are implicated in subunit movement. Contacts the tRNAs in the A and P-sites. This chain is Small ribosomal subunit protein uS13, found in Lysinibacillus sphaericus (strain C3-41).